Reading from the N-terminus, the 153-residue chain is Small ribosomal subunit protein uS12m (153 aa).

Residues 1-20 (MLSRFMSNTWCTPLRQAQRL) constitute a mitochondrion transit peptide.

This sequence belongs to the universal ribosomal protein uS12 family. In terms of assembly, component of the mitochondrial small ribosomal subunit (mt-SSU). Mature yeast 74S mitochondrial ribosomes consist of a small (37S) and a large (54S) subunit. The 37S small subunit contains a 15S ribosomal RNA (15S mt-rRNA) and 34 different proteins. The 54S large subunit contains a 21S rRNA (21S mt-rRNA) and 46 different proteins. uS12m forms part of the decoding center of the mt-SSU.

It localises to the mitochondrion. Its function is as follows. Component of the mitochondrial ribosome (mitoribosome), a dedicated translation machinery responsible for the synthesis of mitochondrial genome-encoded proteins, including at least some of the essential transmembrane subunits of the mitochondrial respiratory chain. The mitoribosomes are attached to the mitochondrial inner membrane and translation products are cotranslationally integrated into the membrane. uS12m is required for respiratory growth. This is Small ribosomal subunit protein uS12m (MRPS12) from Saccharomyces cerevisiae (strain ATCC 204508 / S288c) (Baker's yeast).